We begin with the raw amino-acid sequence, 157 residues long: MAKKHRQKPDNLLAQNKKAGHDYNILDTYEAGIALTGTEIKSVRDGKLNLRDGFARIRNNEAWLENVHISPYKEGNLFNVDPMRNRKLLLHKREIRKLGQMTARQGVTLVPLRMYLKHGYAKVLIGVAEGKHNYDKRETLKRKDQEREVQRALKARY.

The protein belongs to the SmpB family.

The protein resides in the cytoplasm. In terms of biological role, required for rescue of stalled ribosomes mediated by trans-translation. Binds to transfer-messenger RNA (tmRNA), required for stable association of tmRNA with ribosomes. tmRNA and SmpB together mimic tRNA shape, replacing the anticodon stem-loop with SmpB. tmRNA is encoded by the ssrA gene; the 2 termini fold to resemble tRNA(Ala) and it encodes a 'tag peptide', a short internal open reading frame. During trans-translation Ala-aminoacylated tmRNA acts like a tRNA, entering the A-site of stalled ribosomes, displacing the stalled mRNA. The ribosome then switches to translate the ORF on the tmRNA; the nascent peptide is terminated with the 'tag peptide' encoded by the tmRNA and targeted for degradation. The ribosome is freed to recommence translation, which seems to be the essential function of trans-translation. The sequence is that of SsrA-binding protein from Lacticaseibacillus paracasei (strain ATCC 334 / BCRC 17002 / CCUG 31169 / CIP 107868 / KCTC 3260 / NRRL B-441) (Lactobacillus paracasei).